Consider the following 473-residue polypeptide: Serine incorporator 3 (473 aa).

The Extracellular portion of the chain corresponds to 1–96; the sequence is MGAVLGVFSL…KDCDVLVGYK (96 aa). N34 carries N-linked (GlcNAc...) asparagine glycosylation. The helical transmembrane segment at 97 to 117 threads the bilayer; the sequence is AVYRISFAMAIFFFVFSLLMF. The Cytoplasmic portion of the chain corresponds to 118-132; sequence KVKTSKDLRAAVHNG. Residues 133-153 form a helical membrane-spanning segment; it reads FWFFKIAALIGIMVGSFYIPG. Topologically, residues 154-159 are extracellular; sequence GYFSSV. A helical transmembrane segment spans residues 160-180; it reads WFVVGMIGAALFILIQLVLLV. Topologically, residues 181–203 are cytoplasmic; sequence DFAHSWNESWVNRMEEGNPRLWY. A helical membrane pass occupies residues 204–224; the sequence is AALLSFTSAFYILSIICVGLL. At 225–239 the chain is on the extracellular side; it reads YTYYTKPDGCTENKF. The helical transmembrane segment at 240–260 threads the bilayer; that stretch reads FISINLILCVVASIISIHPKI. At 261–329 the chain is on the cytoplasmic side; that stretch reads QEHQPRSGLL…VPTPTPPSKS (69 aa). Residues 330 to 350 form a helical membrane-spanning segment; the sequence is GSLLDSDNFIGLFVFVLCLLY. At 351-406 the chain is on the extracellular side; that stretch reads SSIRTSTNSQVDKLTLSGSDSVILGDTTTSGASDEEDGQPRRAVDNEKEGVQYSYS. Position 371 is a phosphoserine (S371). Residues 407-427 form a helical membrane-spanning segment; that stretch reads LFHLMLCLASLYIMMTLTSWY. Residues 428 to 446 are Cytoplasmic-facing; it reads SPDAKFQSMTSKWPAVWVK. The helical transmembrane segment at 447–467 threads the bilayer; the sequence is ISSSWVCLLLYVWTLVAPLVL. At 468-473 the chain is on the extracellular side; sequence TSRDFS.

Belongs to the TDE1 family. Post-translationally, N-glycosylated. Ubiquitous. Expression levels were increased fourfold to tenfold in lung tumor tissues compared with normal pulmonary tissues.

The protein resides in the cell membrane. It is found in the golgi apparatus membrane. The protein localises to the cytoplasm. It localises to the perinuclear region. The catalysed reaction is a 1,2-diacyl-sn-glycero-3-phospho-L-serine(in) = a 1,2-diacyl-sn-glycero-3-phospho-L-serine(out). The enzyme catalyses a 1,2-diacyl-sn-glycero-3-phosphocholine(in) = a 1,2-diacyl-sn-glycero-3-phosphocholine(out). It catalyses the reaction a 1,2-diacyl-sn-glycero-3-phosphoethanolamine(in) = a 1,2-diacyl-sn-glycero-3-phosphoethanolamine(out). Restriction factor required to restrict infectivity of lentiviruses, such as HIV-1: acts by inhibiting an early step of viral infection. Impairs the penetration of the viral particle into the cytoplasm. Non-ATP-dependent, non-specific lipid transporter for phosphatidylserine, phosphatidylcholine, and phosphatidylethanolamine. Functions as a scramblase that flips lipids in both directions across the membrane. Phospholipid scrambling results in HIV-1 surface exposure of phosphatidylserine and loss of membrane asymmetry, which leads to changes in HIV-1 Env conformation and loss of infectivity. The polypeptide is Serine incorporator 3 (Homo sapiens (Human)).